We begin with the raw amino-acid sequence, 389 residues long: Lipid-A-disaccharide synthase (389 aa).

The protein belongs to the LpxB family.

It catalyses the reaction a lipid X + a UDP-2-N,3-O-bis[(3R)-3-hydroxyacyl]-alpha-D-glucosamine = a lipid A disaccharide + UDP + H(+). The protein operates within bacterial outer membrane biogenesis; LPS lipid A biosynthesis. In terms of biological role, condensation of UDP-2,3-diacylglucosamine and 2,3-diacylglucosamine-1-phosphate to form lipid A disaccharide, a precursor of lipid A, a phosphorylated glycolipid that anchors the lipopolysaccharide to the outer membrane of the cell. In Burkholderia lata (strain ATCC 17760 / DSM 23089 / LMG 22485 / NCIMB 9086 / R18194 / 383), this protein is Lipid-A-disaccharide synthase.